We begin with the raw amino-acid sequence, 306 residues long: MKYVIGIDGGGSKTHMKISTLDYKVLLEVFKGPSNINSSTKEEVKRVLQELIMEGLGKLGQSLEECSAICIGTAGADRTEDKSIIEDMIRSLGYMGKIIVVNDAEIALAGGIEKREGIIVISGTGSICYGRNKEGRSARSGGWGHIIGDEGSGYDIGIKAIKAALKSFDKRGEKTILEGDILDFLKLKSHEDLINYIYRSGVTKKEIASLTRVVNSAYIKGDLVSKRILKEAARELFLSVKAVVEVLSMQNKKVVLTTAGGVINNINYLYDEFRKFLNLNYPKVKIISMKNDSAFGAVIIARSECD.

ATP is bound at residue Ser12. Asn35 lines the substrate pocket. Thr124 contributes to the ATP binding site. Residues 142–144 (GWG) and Asp149 each bind substrate. ATP is bound at residue Ala208.

This sequence belongs to the eukaryotic-type N-acetylglucosamine kinase family. Mg(2+) is required as a cofactor.

The protein localises to the cytoplasm. It catalyses the reaction N-acetyl-D-glucosamine + ATP = N-acetyl-D-glucosamine 6-phosphate + ADP + H(+). The enzyme catalyses N-acetyl-D-muramate + ATP = N-acetyl-D-muramate 6-phosphate + ADP + H(+). Its pathway is cell wall biogenesis; peptidoglycan recycling. In terms of biological role, catalyzes the ATP-dependent phosphorylation of both cell wall (peptidoglycan) amino sugars, N-acetylmuramic acid (MurNAc) and N-acetylglucosamine (GlcNAc), at the 6-hydroxyl group. Neither the non-N-acetylated forms of the cell wall sugars, i.e., glucosamine and/or muramic acid, nor epimeric hexoses or 1,6-anhydro-MurNAc are substrates for the enzyme. May have a role in the rescue of the murein sugars GlcNAc and MurNAc released from muropeptides during cell wall turnover in C.acetobutylicum. The polypeptide is N-acetylmuramic acid/N-acetylglucosamine kinase (Clostridium acetobutylicum (strain ATCC 824 / DSM 792 / JCM 1419 / IAM 19013 / LMG 5710 / NBRC 13948 / NRRL B-527 / VKM B-1787 / 2291 / W)).